A 263-amino-acid chain; its full sequence is Type III pantothenate kinase (263 aa).

Residue 9–16 (DIGNTNVK) coordinates ATP. Residues Tyr103 and 110–113 (GADR) each bind substrate. Asp112 serves as the catalytic Proton acceptor. Asp134 is a K(+) binding site. Thr137 provides a ligand contact to ATP. Position 190 (Thr190) interacts with substrate.

It belongs to the type III pantothenate kinase family. In terms of assembly, homodimer. NH4(+) is required as a cofactor. It depends on K(+) as a cofactor.

It is found in the cytoplasm. The catalysed reaction is (R)-pantothenate + ATP = (R)-4'-phosphopantothenate + ADP + H(+). It participates in cofactor biosynthesis; coenzyme A biosynthesis; CoA from (R)-pantothenate: step 1/5. Functionally, catalyzes the phosphorylation of pantothenate (Pan), the first step in CoA biosynthesis. This Oleidesulfovibrio alaskensis (strain ATCC BAA-1058 / DSM 17464 / G20) (Desulfovibrio alaskensis) protein is Type III pantothenate kinase.